The primary structure comprises 78 residues: Vacuolar ATPase assembly integral membrane protein VMA21 (78 aa).

Topologically, residues 1-14 are cytoplasmic; the sequence is MPADIPKSVVQKLV. The chain crosses the membrane as a helical span at residues 15–35; sequence FFTAAMIICPVATFFICQYLF. The Lumenal portion of the chain corresponds to 36 to 38; it reads SNN. Residues 39-59 traverse the membrane as a helical segment; the sequence is AIISGGVSALVANIVLIGYVV. The Cytoplasmic portion of the chain corresponds to 60-78; that stretch reads AAFMEDTTEQEPEETKKSR. Positions 75–78 match the Prevents secretion from ER motif; it reads KKSR.

The protein belongs to the VMA21 family.

Its subcellular location is the endoplasmic reticulum membrane. The protein resides in the endoplasmic reticulum-Golgi intermediate compartment membrane. It localises to the cytoplasmic vesicle. The protein localises to the COPII-coated vesicle membrane. Its function is as follows. Required for the assembly of the V0 complex of the vacuolar ATPase (V-ATPase) in the endoplasmic reticulum. The protein is Vacuolar ATPase assembly integral membrane protein VMA21 of Debaryomyces hansenii (strain ATCC 36239 / CBS 767 / BCRC 21394 / JCM 1990 / NBRC 0083 / IGC 2968) (Yeast).